The primary structure comprises 154 residues: Putative NADPH-dependent 7-cyano-7-deazaguanine reductase (154 aa).

The active-site Proton donor is Asp52. Substrate contacts are provided by residues 67–69 (VES) and 86–87 (HE).

This sequence belongs to the GTP cyclohydrolase I family. QueF type 1 subfamily.

Its subcellular location is the cytoplasm. It catalyses the reaction 7-aminomethyl-7-carbaguanine + 2 NADP(+) = 7-cyano-7-deazaguanine + 2 NADPH + 3 H(+). It functions in the pathway tRNA modification; tRNA-queuosine biosynthesis. Functionally, catalyzes the NADPH-dependent reduction of 7-cyano-7-deazaguanine (preQ0) to 7-aminomethyl-7-deazaguanine (preQ1). In Streptococcus pneumoniae (strain ATCC BAA-255 / R6), this protein is Putative NADPH-dependent 7-cyano-7-deazaguanine reductase.